The following is a 222-amino-acid chain: uncharacterized protein (222 aa).

Residues 43-73 (SQNEEFEYEMERMLSILNEQTMDLTQLQSRI) adopt a coiled-coil conformation.

This is an uncharacterized protein from Rickettsia conorii (strain ATCC VR-613 / Malish 7).